We begin with the raw amino-acid sequence, 490 residues long: Aspartyl/glutamyl-tRNA(Asn/Gln) amidotransferase subunit B (490 aa).

This sequence belongs to the GatB/GatE family. GatB subfamily. In terms of assembly, heterotrimer of A, B and C subunits.

The enzyme catalyses L-glutamyl-tRNA(Gln) + L-glutamine + ATP + H2O = L-glutaminyl-tRNA(Gln) + L-glutamate + ADP + phosphate + H(+). It catalyses the reaction L-aspartyl-tRNA(Asn) + L-glutamine + ATP + H2O = L-asparaginyl-tRNA(Asn) + L-glutamate + ADP + phosphate + 2 H(+). Its function is as follows. Allows the formation of correctly charged Asn-tRNA(Asn) or Gln-tRNA(Gln) through the transamidation of misacylated Asp-tRNA(Asn) or Glu-tRNA(Gln) in organisms which lack either or both of asparaginyl-tRNA or glutaminyl-tRNA synthetases. The reaction takes place in the presence of glutamine and ATP through an activated phospho-Asp-tRNA(Asn) or phospho-Glu-tRNA(Gln). The protein is Aspartyl/glutamyl-tRNA(Asn/Gln) amidotransferase subunit B of Burkholderia vietnamiensis (strain G4 / LMG 22486) (Burkholderia cepacia (strain R1808)).